The chain runs to 102 residues: NADH-quinone oxidoreductase subunit K 2 (102 aa).

The next 3 membrane-spanning stretches (helical) occupy residues 6–26 (LEAF…GIIA), 30–50 (LVTV…ALVG), and 66–86 (FIIA…IAIF).

It belongs to the complex I subunit 4L family. NDH-1 is composed of 14 different subunits. Subunits NuoA, H, J, K, L, M, N constitute the membrane sector of the complex.

The protein localises to the cell inner membrane. It carries out the reaction a quinone + NADH + 5 H(+)(in) = a quinol + NAD(+) + 4 H(+)(out). Functionally, NDH-1 shuttles electrons from NADH, via FMN and iron-sulfur (Fe-S) centers, to quinones in the respiratory chain. The immediate electron acceptor for the enzyme in this species is believed to be ubiquinone. Couples the redox reaction to proton translocation (for every two electrons transferred, four hydrogen ions are translocated across the cytoplasmic membrane), and thus conserves the redox energy in a proton gradient. This chain is NADH-quinone oxidoreductase subunit K 2, found in Aquifex aeolicus (strain VF5).